The following is a 156-amino-acid chain: Cyclic pyranopterin monophosphate synthase (156 aa).

Substrate is bound by residues 75–77 (LCH) and 111–112 (ME). Asp-126 is a catalytic residue.

This sequence belongs to the MoaC family. In terms of assembly, homohexamer; trimer of dimers.

It carries out the reaction (8S)-3',8-cyclo-7,8-dihydroguanosine 5'-triphosphate = cyclic pyranopterin phosphate + diphosphate. It functions in the pathway cofactor biosynthesis; molybdopterin biosynthesis. Functionally, catalyzes the conversion of (8S)-3',8-cyclo-7,8-dihydroguanosine 5'-triphosphate to cyclic pyranopterin monophosphate (cPMP). The protein is Cyclic pyranopterin monophosphate synthase of Corynebacterium glutamicum (strain R).